Consider the following 205-residue polypeptide: Helix-loop-helix protein 4 (205 aa).

The basic motif stretch occupies residues 3–16; that stretch reads MVVAKRNARERTRV. Positions 3 to 56 constitute a bHLH domain; the sequence is MVVAKRNARERTRVHTVNQAFLVLKQHLPSLRQFTKRVSKLRILNAAITYIDTL. A helix-loop-helix motif region spans residues 17–56; sequence HTVNQAFLVLKQHLPSLRQFTKRVSKLRILNAAITYIDTL.

As to expression, expressed in the ADL sensory neurons.

The protein localises to the nucleus. In terms of biological role, acts as a transcriptional regulator. May mediate transcriptional activation by binding to the E-box motif 5'-CANNTG-3'. Required for the correct morphology, terminal identity and function of the ADL sensory neurons by controlling the expression of the ADL-specific gene repertoire, including chemoreceptor encoding genes, ion channel encoding genes, neuropeptides and the neurotransmitter eat-4. Regulates the expression of the srh-234 chemoreceptor encoding gene in the ADL neurons under feeding conditions. Plays a role in the chemorepulsive response toward ascaroside pheromones mediated by the ADL sensory neurons. This Caenorhabditis elegans protein is Helix-loop-helix protein 4 (hlh-4).